Reading from the N-terminus, the 440-residue chain is MHFLDDNIQIKIDKFYKKNSLNKNRVIVAFSGGADSTTLLLNLKYYLSNNIVAFYFAHFIRTDNEQNKEIEHVKGFCDLYNIALQVKKCDIDIKSESVRLGVSIEELARKCRYNALENALKENDANYIALAHNENDQIETIIMRFFQGSFLDGLSGIPGVNKNIIRPLLEVSRLEIENFLSLNNISFFVDSTNAQDLYLRNRVRNNLLPSIEKIFKGYQKCLKRISEFSKEFVDYFEKDEFFPVEKGKYYYSFDLKTFLNFPKYLVFRLIFKILNSEGIVAKVSYKALNEAFKVEINRKKNNVLLKTNDFFLEKRHNKINLIFKRDEKFYKPFDFILEVGKWHSLSLGKILLKCLECNTSSVSRLKCCSYEFRYKFFKDRFKAKKFFSKFIRCNPIYLMLLALDNRLIGIIDLNTLNLVWSEKSILKKISISLIGGLLKE.

31-36 (SGGADS) is a binding site for ATP.

It belongs to the tRNA(Ile)-lysidine synthase family.

The protein resides in the cytoplasm. It catalyses the reaction cytidine(34) in tRNA(Ile2) + L-lysine + ATP = lysidine(34) in tRNA(Ile2) + AMP + diphosphate + H(+). Functionally, ligates lysine onto the cytidine present at position 34 of the AUA codon-specific tRNA(Ile) that contains the anticodon CAU, in an ATP-dependent manner. Cytidine is converted to lysidine, thus changing the amino acid specificity of the tRNA from methionine to isoleucine. This is tRNA(Ile)-lysidine synthase from Borrelia garinii subsp. bavariensis (strain ATCC BAA-2496 / DSM 23469 / PBi) (Borreliella bavariensis).